The primary structure comprises 259 residues: UPF0246 protein PBPRA0561 (259 aa).

Belongs to the UPF0246 family.

The protein is UPF0246 protein PBPRA0561 of Photobacterium profundum (strain SS9).